The primary structure comprises 180 residues: Interleukin-17B (180 aa).

An N-terminal signal peptide occupies residues 1-22 (MDWPHSLLFLLAISIFLAPSHP). Residues 22–44 (PRNTKGKRKGQGRPSPLAPGPHQ) are disordered. A compositionally biased stretch (basic residues) spans 23-32 (RNTKGKRKGQ). N-linked (GlcNAc...) asparagine glycosylation is present at N75. Intrachain disulfides connect C121–C176 and C126–C178.

Belongs to the IL-17 family.

It is found in the secreted. Functionally, stimulates the release of tumor necrosis factor alpha and IL-1-beta from the monocytic cell line THP-1. The sequence is that of Interleukin-17B (Il17b) from Mus musculus (Mouse).